Reading from the N-terminus, the 485-residue chain is Alginate biosynthesis protein AlgA (485 aa).

The protein belongs to the mannose-6-phosphate isomerase type 2 family. In terms of assembly, monomer. Requires Co(2+) as cofactor.

It carries out the reaction D-mannose 6-phosphate = D-fructose 6-phosphate. The enzyme catalyses alpha-D-mannose 1-phosphate + GTP + H(+) = GDP-alpha-D-mannose + diphosphate. It participates in nucleotide-sugar biosynthesis; GDP-alpha-D-mannose biosynthesis; GDP-alpha-D-mannose from alpha-D-mannose 1-phosphate (GTP route): step 1/1. It functions in the pathway nucleotide-sugar biosynthesis; GDP-alpha-D-mannose biosynthesis; alpha-D-mannose 1-phosphate from D-fructose 6-phosphate: step 1/2. Functionally, produces a precursor for alginate polymerization. The alginate layer provides a protective barrier against host immune defenses and antibiotics. The sequence is that of Alginate biosynthesis protein AlgA (algA) from Pseudomonas putida (strain ATCC 47054 / DSM 6125 / CFBP 8728 / NCIMB 11950 / KT2440).